Consider the following 161-residue polypeptide: Anther-specific protein LAT52 (161 aa).

The N-terminal stretch at 1-17 is a signal peptide; that stretch reads MAKAIVLLSALCILALA. Disulfide bonds link C35–C106, C38–C147, and C59–C94. N-linked (GlcNAc...) asparagine glycosylation occurs at N61.

This sequence belongs to the Ole e I family. As to expression, expressed in anthers and pollen.

In terms of biological role, may play a role during germination or early tube growth. The protein is Anther-specific protein LAT52 (LAT52) of Solanum lycopersicum (Tomato).